The following is an 84-amino-acid chain: Sec-independent protein translocase protein TatA (84 aa).

Residues 1-21 (MPNLGVPELLIIALVIFLLFG) form a helical membrane-spanning segment. Positions 42 to 57 (EMDEMKTDGDKKELAE) are enriched in basic and acidic residues. The segment at 42 to 84 (EMDEMKTDGDKKELAEKQAPTAEQQQAQDLAQPKSEQPNEHNA) is disordered. Residues 62 to 77 (TAEQQQAQDLAQPKSE) are compositionally biased toward polar residues.

The protein belongs to the TatA/E family. The Tat system comprises two distinct complexes: a TatABC complex, containing multiple copies of TatA, TatB and TatC subunits, and a separate TatA complex, containing only TatA subunits. Substrates initially bind to the TatABC complex, which probably triggers association of the separate TatA complex to form the active translocon.

It is found in the cell membrane. Part of the twin-arginine translocation (Tat) system that transports large folded proteins containing a characteristic twin-arginine motif in their signal peptide across membranes. TatA could form the protein-conducting channel of the Tat system. This Corynebacterium jeikeium (strain K411) protein is Sec-independent protein translocase protein TatA.